Here is a 251-residue protein sequence, read N- to C-terminus: Phosphate import ATP-binding protein PstB (251 aa).

Residues 5 to 246 (IKIRGVNFFY…PKDKRTEDYI (242 aa)) form the ABC transporter domain. 37–44 (GPSGCGKS) contributes to the ATP binding site.

It belongs to the ABC transporter superfamily. Phosphate importer (TC 3.A.1.7) family. As to quaternary structure, the complex is composed of two ATP-binding proteins (PstB), two transmembrane proteins (PstC and PstA) and a solute-binding protein (PstS).

The protein resides in the cell membrane. The enzyme catalyses phosphate(out) + ATP + H2O = ADP + 2 phosphate(in) + H(+). Part of the ABC transporter complex PstSACB involved in phosphate import. Responsible for energy coupling to the transport system. This chain is Phosphate import ATP-binding protein PstB, found in Dehalococcoides mccartyi (strain ATCC BAA-2266 / KCTC 15142 / 195) (Dehalococcoides ethenogenes (strain 195)).